Consider the following 549-residue polypeptide: Probable protein kinase UbiB (549 aa).

Positions 123–501 (DFNEIPLASA…QQQAHKSNYL (379 aa)) constitute a Protein kinase domain. ATP-binding positions include 129 to 137 (LASASISQV) and Lys-152. Asp-287 functions as the Proton acceptor in the catalytic mechanism. The next 2 membrane-spanning stretches (helical) occupy residues 496-516 (HKSNYLLITSAVLLICGTLLI) and 520-540 (ATLWTPYVCLVSGIILWFVGW).

This sequence belongs to the ABC1 family. UbiB subfamily.

It is found in the cell inner membrane. Its pathway is cofactor biosynthesis; ubiquinone biosynthesis [regulation]. In terms of biological role, is probably a protein kinase regulator of UbiI activity which is involved in aerobic coenzyme Q (ubiquinone) biosynthesis. The protein is Probable protein kinase UbiB of Shewanella baltica (strain OS223).